The sequence spans 305 residues: Ribosomal RNA small subunit methyltransferase H (305 aa).

Residues 46 to 48, Asp65, Phe92, Asp108, and His115 each bind S-adenosyl-L-methionine; that span reads GGH.

Belongs to the methyltransferase superfamily. RsmH family.

It is found in the cytoplasm. It carries out the reaction cytidine(1402) in 16S rRNA + S-adenosyl-L-methionine = N(4)-methylcytidine(1402) in 16S rRNA + S-adenosyl-L-homocysteine + H(+). Functionally, specifically methylates the N4 position of cytidine in position 1402 (C1402) of 16S rRNA. The protein is Ribosomal RNA small subunit methyltransferase H of Trichormus variabilis (strain ATCC 29413 / PCC 7937) (Anabaena variabilis).